An 867-amino-acid chain; its full sequence is Translation initiation factor IF-2 (867 aa).

Positions 367-534 (TRAPVVTIMG…AILLQSEILE (168 aa)) constitute a tr-type G domain. The segment at 376-383 (GHVDHGKT) is G1. Residue 376–383 (GHVDHGKT) coordinates GTP. Residues 401–405 (GITQN) are G2. The interval 422–425 (DTPG) is G3. Residues 422–426 (DTPGH) and 476–479 (NKID) each bind GTP. The G4 stretch occupies residues 476 to 479 (NKID). The segment at 512 to 514 (SAK) is G5.

This sequence belongs to the TRAFAC class translation factor GTPase superfamily. Classic translation factor GTPase family. IF-2 subfamily.

The protein resides in the cytoplasm. Its function is as follows. One of the essential components for the initiation of protein synthesis. Protects formylmethionyl-tRNA from spontaneous hydrolysis and promotes its binding to the 30S ribosomal subunits. Also involved in the hydrolysis of GTP during the formation of the 70S ribosomal complex. This chain is Translation initiation factor IF-2, found in Buchnera aphidicola subsp. Schizaphis graminum (strain Sg).